The following is a 637-amino-acid chain: Extracellular metalloproteinase MEP (637 aa).

The first 21 residues, 1 to 21 (MRSVDSLLLLGLTGLASQANA), serve as a signal peptide directing secretion. Residues 22-246 (HPAKRQPNDS…VVGVVDYVAD (225 aa)) constitute a propeptide that is removed on maturation. Asn288 carries N-linked (GlcNAc...) asparagine glycosylation. His431 contacts Zn(2+). The active site involves Glu432. His435 contributes to the Zn(2+) binding site.

The protein belongs to the peptidase M36 family. It depends on Zn(2+) as a cofactor.

It is found in the secreted. Its function is as follows. Secreted metalloproteinase that probably acts as a virulence factor. Cleaves Z.mays Endochitinase A (CHIA) between residues 'Gly-29' and 'Cys-30'. This Fusarium vanettenii (strain ATCC MYA-4622 / CBS 123669 / FGSC 9596 / NRRL 45880 / 77-13-4) (Fusarium solani subsp. pisi) protein is Extracellular metalloproteinase MEP (MEP).